A 328-amino-acid chain; its full sequence is Carbonic anhydrase-related protein 10 (328 aa).

The Alpha-carbonic anhydrase domain maps to 31-301 (GWWAYKEVVQ…LNNRCIRTNI (271 aa)).

It belongs to the alpha-carbonic anhydrase family.

Does not have a catalytic activity. The protein is Carbonic anhydrase-related protein 10 (CA10) of Macaca fascicularis (Crab-eating macaque).